The chain runs to 717 residues: ATP-dependent RNA helicase homolog DQX1 (717 aa).

The 169-residue stretch at 57–225 (QLESNPTGVV…WGNPPIVHIP (169 aa)) folds into the Helicase ATP-binding domain. 70–77 (GEPGSGKS) provides a ligand contact to ATP. Positions 170 to 173 (DEAQ) match the DEAQ box motif. The 200-residue stretch at 248-447 (ACQAVLELCR…ALMQALEDLD (200 aa)) folds into the Helicase C-terminal domain. A disordered region spans residues 694–717 (GMADSTAGSKSSSAQEFRDPCVLQ). The segment covering 699-708 (TAGSKSSSAQ) has biased composition (polar residues).

The protein resides in the nucleus. In terms of biological role, might be involved in RNA metabolism; it is missing helicase motif III and may not have helicase activity. In Homo sapiens (Human), this protein is ATP-dependent RNA helicase homolog DQX1 (DQX1).